A 153-amino-acid polypeptide reads, in one-letter code: MNIFEGKLIAEGLKVGIIVGRFNEFIGSKLLDGALDGFKRHGVNVEDIDVAWVPGAFEMPLIAKKMAKSPKYDAVICLGAVIKGSTSHYDYVCSEVSKGIANVSLETGKPVMFGVLTTNNIEQAIERAGTKAGNKGYECAVGAIEMANLIKEL.

5-amino-6-(D-ribitylamino)uracil is bound by residues F22, 56–58, and 80–82; these read AFE and AVI. A (2S)-2-hydroxy-3-oxobutyl phosphate-binding site is contributed by 85 to 86; that stretch reads ST. H88 acts as the Proton donor in catalysis. Residue F113 participates in 5-amino-6-(D-ribitylamino)uracil binding. R127 contributes to the (2S)-2-hydroxy-3-oxobutyl phosphate binding site.

This sequence belongs to the DMRL synthase family.

The enzyme catalyses (2S)-2-hydroxy-3-oxobutyl phosphate + 5-amino-6-(D-ribitylamino)uracil = 6,7-dimethyl-8-(1-D-ribityl)lumazine + phosphate + 2 H2O + H(+). Its pathway is cofactor biosynthesis; riboflavin biosynthesis; riboflavin from 2-hydroxy-3-oxobutyl phosphate and 5-amino-6-(D-ribitylamino)uracil: step 1/2. Its function is as follows. Catalyzes the formation of 6,7-dimethyl-8-ribityllumazine by condensation of 5-amino-6-(D-ribitylamino)uracil with 3,4-dihydroxy-2-butanone 4-phosphate. This is the penultimate step in the biosynthesis of riboflavin. The polypeptide is 6,7-dimethyl-8-ribityllumazine synthase (Clostridium botulinum (strain Eklund 17B / Type B)).